Here is a 326-residue protein sequence, read N- to C-terminus: Mitochondrial glycine transporter (326 aa).

Solcar repeat units follow at residues 45 to 134 (HPVI…SKQY), 141 to 225 (PTAL…TRAT), and 237 to 321 (LMPL…MMAK). 6 helical membrane passes run 51-76 (FLCG…TRLQ), 109-135 (GMSP…KQYF), 147-172 (VILG…TRYE), 200-223 (GLTA…SQTR), 241-267 (VNFS…KTHM), and 296-314 (GSVP…AWTV).

This sequence belongs to the mitochondrial carrier (TC 2.A.29) family. SLC25A38 subfamily.

It is found in the mitochondrion inner membrane. It carries out the reaction glycine(in) = glycine(out). Functionally, mitochondrial glycine transporter that imports glycine into the mitochondrial matrix. Plays an important role in providing glycine for the first enzymatic step in heme biosynthesis, the condensation of glycine with succinyl-CoA to produce 5-aminolevulinate (ALA) in the mitochondrial matrix. Required during erythropoiesis. In terms of biological role, plays a role as pro-apoptotic protein that induces caspase-dependent apoptosis. This chain is Mitochondrial glycine transporter, found in Rattus norvegicus (Rat).